The sequence spans 234 residues: Large ribosomal subunit protein uL1 (234 aa).

Belongs to the universal ribosomal protein uL1 family. In terms of assembly, part of the 50S ribosomal subunit.

Functionally, binds directly to 23S rRNA. The L1 stalk is quite mobile in the ribosome, and is involved in E site tRNA release. In terms of biological role, protein L1 is also a translational repressor protein, it controls the translation of the L11 operon by binding to its mRNA. This chain is Large ribosomal subunit protein uL1, found in Cronobacter sakazakii (strain ATCC BAA-894) (Enterobacter sakazakii).